A 161-amino-acid polypeptide reads, in one-letter code: Regulator of ribonuclease activity A (161 aa).

This sequence belongs to the RraA family. As to quaternary structure, homotrimer. Binds to both RNA-binding sites in the C-terminal region of Rne and to RhlB.

The protein localises to the cytoplasm. Globally modulates RNA abundance by binding to RNase E (Rne) and regulating its endonucleolytic activity. Can modulate Rne action in a substrate-dependent manner by altering the composition of the degradosome. Modulates RNA-binding and helicase activities of the degradosome. This chain is Regulator of ribonuclease activity A, found in Pseudoalteromonas atlantica (strain T6c / ATCC BAA-1087).